A 299-amino-acid chain; its full sequence is Protease HtpX homolog (299 aa).

The next 2 membrane-spanning stretches (helical) occupy residues 14–34 and 39–59; these read WLLL…VGYL and GFGG…TMIF. H143 serves as a coordination point for Zn(2+). E144 is an active-site residue. H147 lines the Zn(2+) pocket. The next 2 helical transmembrane spans lie at 153-173 and 198-218; these read IRIS…AVMA and IILL…ATLV. E227 is a Zn(2+) binding site.

This sequence belongs to the peptidase M48B family. It depends on Zn(2+) as a cofactor.

It localises to the cell membrane. This is Protease HtpX homolog from Streptococcus thermophilus (strain CNRZ 1066).